The primary structure comprises 712 residues: Semaphorin-1A (712 aa).

The first 20 residues, 1–20 (MVVKILVWSICLIALCHAWM), serve as a signal peptide directing secretion. Residues 21–483 (PDSSSKLINH…GKDEIRLANL (463 aa)) form the Sema domain. The Extracellular portion of the chain corresponds to 21 to 601 (PDSSSKLINH…IGGCAVRQQL (581 aa)). Asn42 and Asn69 each carry an N-linked (GlcNAc...) asparagine glycan. Disulfide bonds link Cys95–Cys105 and Cys123–Cys132. N-linked (GlcNAc...) asparagine glycosylation is found at Asn161 and Asn265. 4 disulfides stabilise this stretch: Cys242/Cys357, Cys266/Cys316, Cys486/Cys503, and Cys495/Cys512. Residues 602 to 622 (VIYTAGTLHIVVVVVSIVGLF) form a helical membrane-spanning segment. Residues 623-712 (SWLYSGLSVF…TLQKIKKTYI (90 aa)) lie on the Cytoplasmic side of the membrane.

The protein belongs to the semaphorin family.

It localises to the membrane. In terms of biological role, plays a role in growth cones guidance. The chain is Semaphorin-1A (SEMA-1A) from Tribolium confusum (Confused flour beetle).